A 104-amino-acid chain; its full sequence is L-rhamnose mutarotase (104 aa).

Substrate is bound at residue Tyr18. The active-site Proton donor is His22. Residues Tyr41 and 76–77 each bind substrate; that span reads WW.

This sequence belongs to the rhamnose mutarotase family. In terms of assembly, homodimer.

The protein localises to the cytoplasm. The catalysed reaction is alpha-L-rhamnose = beta-L-rhamnose. The protein operates within carbohydrate metabolism; L-rhamnose metabolism. Involved in the anomeric conversion of L-rhamnose. This is L-rhamnose mutarotase from Salmonella heidelberg (strain SL476).